The following is a 150-amino-acid chain: Spore germination protein GerT (150 aa).

The protein localises to the spore coat. Its function is as follows. Involved in spore germination. The chain is Spore germination protein GerT (gerT) from Bacillus licheniformis (strain ATCC 14580 / DSM 13 / JCM 2505 / CCUG 7422 / NBRC 12200 / NCIMB 9375 / NCTC 10341 / NRRL NRS-1264 / Gibson 46).